Here is a 237-residue protein sequence, read N- to C-terminus: Ribose-5-phosphate isomerase A (237 aa).

Substrate contacts are provided by residues 29-32 (SGST), 86-89 (DGAD), and 99-102 (KGGG). Residue Glu-108 is the Proton acceptor of the active site. Residue Lys-126 coordinates substrate.

Belongs to the ribose 5-phosphate isomerase family. In terms of assembly, homodimer.

The catalysed reaction is aldehydo-D-ribose 5-phosphate = D-ribulose 5-phosphate. It functions in the pathway carbohydrate degradation; pentose phosphate pathway; D-ribose 5-phosphate from D-ribulose 5-phosphate (non-oxidative stage): step 1/1. Functionally, catalyzes the reversible conversion of ribose-5-phosphate to ribulose 5-phosphate. The sequence is that of Ribose-5-phosphate isomerase A from Prochlorococcus marinus (strain MIT 9312).